Here is a 428-residue protein sequence, read N- to C-terminus: Serine--tRNA ligase (428 aa).

231-233 contacts L-serine; the sequence is TAE. 262-264 serves as a coordination point for ATP; sequence RSE. Glutamate 285 serves as a coordination point for L-serine. Residue 349–352 participates in ATP binding; sequence EISS. Position 385 (serine 385) interacts with L-serine.

The protein belongs to the class-II aminoacyl-tRNA synthetase family. Type-1 seryl-tRNA synthetase subfamily. As to quaternary structure, homodimer. The tRNA molecule binds across the dimer.

The protein resides in the cytoplasm. It catalyses the reaction tRNA(Ser) + L-serine + ATP = L-seryl-tRNA(Ser) + AMP + diphosphate + H(+). The catalysed reaction is tRNA(Sec) + L-serine + ATP = L-seryl-tRNA(Sec) + AMP + diphosphate + H(+). The protein operates within aminoacyl-tRNA biosynthesis; selenocysteinyl-tRNA(Sec) biosynthesis; L-seryl-tRNA(Sec) from L-serine and tRNA(Sec): step 1/1. Its function is as follows. Catalyzes the attachment of serine to tRNA(Ser). Is also able to aminoacylate tRNA(Sec) with serine, to form the misacylated tRNA L-seryl-tRNA(Sec), which will be further converted into selenocysteinyl-tRNA(Sec). The protein is Serine--tRNA ligase of Staphylococcus aureus (strain USA300).